Consider the following 75-residue polypeptide: Exodeoxyribonuclease 7 small subunit (75 aa).

It belongs to the XseB family. As to quaternary structure, heterooligomer composed of large and small subunits.

Its subcellular location is the cytoplasm. The catalysed reaction is Exonucleolytic cleavage in either 5'- to 3'- or 3'- to 5'-direction to yield nucleoside 5'-phosphates.. Functionally, bidirectionally degrades single-stranded DNA into large acid-insoluble oligonucleotides, which are then degraded further into small acid-soluble oligonucleotides. This Thermoanaerobacter sp. (strain X514) protein is Exodeoxyribonuclease 7 small subunit.